The primary structure comprises 477 residues: Adenosylhomocysteinase (477 aa).

The substrate site is built by T63, D142, and E202. Residue 203–205 participates in NAD(+) binding; sequence TTT. Substrate-binding residues include K232 and D236. Residues N237, 266–271, E289, N324, 345–347, and N390 contribute to the NAD(+) site; these read GYGDVG and IGH.

This sequence belongs to the adenosylhomocysteinase family. The cofactor is NAD(+).

Its subcellular location is the cytoplasm. It carries out the reaction S-adenosyl-L-homocysteine + H2O = L-homocysteine + adenosine. Its pathway is amino-acid biosynthesis; L-homocysteine biosynthesis; L-homocysteine from S-adenosyl-L-homocysteine: step 1/1. Functionally, may play a key role in the regulation of the intracellular concentration of adenosylhomocysteine. The protein is Adenosylhomocysteinase of Methylibium petroleiphilum (strain ATCC BAA-1232 / LMG 22953 / PM1).